Consider the following 615-residue polypeptide: Protein translocase subunit SecD (615 aa).

The next 6 membrane-spanning stretches (helical) occupy residues tyrosine 10–glycine 30, glutamine 452–tyrosine 472, leucine 477–leucine 497, methionine 504–isoleucine 524, tyrosine 546–tyrosine 568, and glycine 585–tyrosine 605.

It belongs to the SecD/SecF family. SecD subfamily. In terms of assembly, forms a complex with SecF. Part of the essential Sec protein translocation apparatus which comprises SecA, SecYEG and auxiliary proteins SecDF-YajC and YidC.

The protein localises to the cell inner membrane. Its function is as follows. Part of the Sec protein translocase complex. Interacts with the SecYEG preprotein conducting channel. SecDF uses the proton motive force (PMF) to complete protein translocation after the ATP-dependent function of SecA. This Salmonella choleraesuis (strain SC-B67) protein is Protein translocase subunit SecD.